Reading from the N-terminus, the 161-residue chain is MPADLHPDLDALAPLLGTWAGQGSGEYPTIEPFEYLEEVVFSHVGKPFLVYAQKTRAVADGAPLHAETGYLRVPKPGQVELVLAHPSGITEIEVGTYSASGGVIEMEMVTTAIGMTPTAKEVTALSRSFRMVGDELSYRLRMGAVGLPLQHHLGARLRRKS.

The short motif at 17 to 23 (GTWAGQG) is the GXWXGXG element. Histidine 152 lines the heme b pocket.

The protein belongs to the nitrobindin family. In terms of assembly, homodimer. Requires heme b as cofactor.

The enzyme catalyses peroxynitrite = nitrate. It functions in the pathway nitrogen metabolism. Its function is as follows. Heme-binding protein able to scavenge peroxynitrite and to protect free L-tyrosine against peroxynitrite-mediated nitration, by acting as a peroxynitrite isomerase that converts peroxynitrite to nitrate. Therefore, this protein likely plays a role in peroxynitrite sensing and in the detoxification of reactive nitrogen and oxygen species (RNS and ROS, respectively). Is able to bind nitric oxide (NO) in vitro, but may act as a sensor of peroxynitrite levels in vivo. This chain is Peroxynitrite isomerase 2, found in Mycobacterium marinum (strain ATCC BAA-535 / M).